Here is a 247-residue protein sequence, read N- to C-terminus: Cell division protein ZapD (247 aa).

This sequence belongs to the ZapD family. As to quaternary structure, interacts with FtsZ.

Its subcellular location is the cytoplasm. Its function is as follows. Cell division factor that enhances FtsZ-ring assembly. Directly interacts with FtsZ and promotes bundling of FtsZ protofilaments, with a reduction in FtsZ GTPase activity. The protein is Cell division protein ZapD of Klebsiella pneumoniae (strain 342).